We begin with the raw amino-acid sequence, 434 residues long: 3-phosphoshikimate 1-carboxyvinyltransferase (434 aa).

3-phosphoshikimate contacts are provided by K22, S23, and R27. K22 provides a ligand contact to phosphoenolpyruvate. 2 residues coordinate phosphoenolpyruvate: G94 and R122. 3-phosphoshikimate-binding residues include S167, Q169, D314, and K341. A phosphoenolpyruvate-binding site is contributed by Q169. D314 functions as the Proton acceptor in the catalytic mechanism. Phosphoenolpyruvate contacts are provided by R345 and R391.

This sequence belongs to the EPSP synthase family. Monomer.

It is found in the cytoplasm. It catalyses the reaction 3-phosphoshikimate + phosphoenolpyruvate = 5-O-(1-carboxyvinyl)-3-phosphoshikimate + phosphate. Its pathway is metabolic intermediate biosynthesis; chorismate biosynthesis; chorismate from D-erythrose 4-phosphate and phosphoenolpyruvate: step 6/7. Catalyzes the transfer of the enolpyruvyl moiety of phosphoenolpyruvate (PEP) to the 5-hydroxyl of shikimate-3-phosphate (S3P) to produce enolpyruvyl shikimate-3-phosphate and inorganic phosphate. This Leuconostoc mesenteroides subsp. mesenteroides (strain ATCC 8293 / DSM 20343 / BCRC 11652 / CCM 1803 / JCM 6124 / NCDO 523 / NBRC 100496 / NCIMB 8023 / NCTC 12954 / NRRL B-1118 / 37Y) protein is 3-phosphoshikimate 1-carboxyvinyltransferase.